The sequence spans 470 residues: Cysteine--tRNA ligase (470 aa).

Residue cysteine 27 participates in Zn(2+) binding. The 'HIGH' region motif lies at 29-39; it reads PTVYNFFHIGN. Residues cysteine 211, histidine 236, and glutamate 240 each coordinate Zn(2+). The short motif at 268 to 272 is the 'KMSKS' region element; it reads KMSKS. Lysine 271 is an ATP binding site.

This sequence belongs to the class-I aminoacyl-tRNA synthetase family. In terms of assembly, monomer. Zn(2+) is required as a cofactor.

Its subcellular location is the cytoplasm. It carries out the reaction tRNA(Cys) + L-cysteine + ATP = L-cysteinyl-tRNA(Cys) + AMP + diphosphate. The polypeptide is Cysteine--tRNA ligase (Clostridium botulinum (strain Eklund 17B / Type B)).